Reading from the N-terminus, the 470-residue chain is Siroheme synthase (470 aa).

The interval 1–213 is precorrin-2 dehydrogenase /sirohydrochlorin ferrochelatase; the sequence is MSDATDPGWF…GEHAAARQVL (213 aa). NAD(+) is bound by residues 28 to 29 and 49 to 50; these read GI and PR. Residues 224–470 form a uroporphyrinogen-III C-methyltransferase region; the sequence is GEVWLVGAGP…VVTPPPLSGT (247 aa). Proline 233 serves as a coordination point for S-adenosyl-L-methionine. The active-site Proton acceptor is aspartate 256. The active-site Proton donor is the lysine 278. Residues 309 to 311, isoleucine 314, 339 to 340, methionine 392, and glycine 421 contribute to the S-adenosyl-L-methionine site; these read GGD and TA.

It in the N-terminal section; belongs to the precorrin-2 dehydrogenase / sirohydrochlorin ferrochelatase family. In the C-terminal section; belongs to the precorrin methyltransferase family.

It catalyses the reaction uroporphyrinogen III + 2 S-adenosyl-L-methionine = precorrin-2 + 2 S-adenosyl-L-homocysteine + H(+). The catalysed reaction is precorrin-2 + NAD(+) = sirohydrochlorin + NADH + 2 H(+). It carries out the reaction siroheme + 2 H(+) = sirohydrochlorin + Fe(2+). It participates in cofactor biosynthesis; adenosylcobalamin biosynthesis; precorrin-2 from uroporphyrinogen III: step 1/1. It functions in the pathway cofactor biosynthesis; adenosylcobalamin biosynthesis; sirohydrochlorin from precorrin-2: step 1/1. Its pathway is porphyrin-containing compound metabolism; siroheme biosynthesis; precorrin-2 from uroporphyrinogen III: step 1/1. The protein operates within porphyrin-containing compound metabolism; siroheme biosynthesis; siroheme from sirohydrochlorin: step 1/1. It participates in porphyrin-containing compound metabolism; siroheme biosynthesis; sirohydrochlorin from precorrin-2: step 1/1. In terms of biological role, multifunctional enzyme that catalyzes the SAM-dependent methylations of uroporphyrinogen III at position C-2 and C-7 to form precorrin-2 via precorrin-1. Then it catalyzes the NAD-dependent ring dehydrogenation of precorrin-2 to yield sirohydrochlorin. Finally, it catalyzes the ferrochelation of sirohydrochlorin to yield siroheme. The chain is Siroheme synthase from Gluconacetobacter diazotrophicus (strain ATCC 49037 / DSM 5601 / CCUG 37298 / CIP 103539 / LMG 7603 / PAl5).